Consider the following 1330-residue polypeptide: DNA-directed RNA polymerase subunit beta'' (1330 aa).

The Zn(2+) site is built by Cys-214, Cys-282, Cys-289, and Cys-292.

This sequence belongs to the RNA polymerase beta' chain family. RpoC2 subfamily. In plastids the minimal PEP RNA polymerase catalytic core is composed of four subunits: alpha, beta, beta', and beta''. When a (nuclear-encoded) sigma factor is associated with the core the holoenzyme is formed, which can initiate transcription. Requires Zn(2+) as cofactor.

The protein resides in the plastid. It is found in the chloroplast. The enzyme catalyses RNA(n) + a ribonucleoside 5'-triphosphate = RNA(n+1) + diphosphate. DNA-dependent RNA polymerase catalyzes the transcription of DNA into RNA using the four ribonucleoside triphosphates as substrates. The protein is DNA-directed RNA polymerase subunit beta'' of Physcomitrium patens (Spreading-leaved earth moss).